The primary structure comprises 398 residues: Cytochrome b (398 aa).

4 helical membrane-spanning segments follow: residues phenylalanine 33–methionine 53, tryptophan 77–isoleucine 98, tryptophan 113–leucine 133, and phenylalanine 178–leucine 198. Heme b-binding residues include histidine 83 and histidine 97. Positions 182 and 196 each coordinate heme b. Histidine 201 lines the a ubiquinone pocket. The next 4 membrane-spanning stretches (helical) occupy residues tyrosine 226–alanine 246, leucine 288–histidine 308, phenylalanine 320–glycine 340, and tyrosine 347–proline 367.

This sequence belongs to the cytochrome b family. In terms of assembly, the cytochrome bc1 complex contains 3 respiratory subunits (MT-CYB, CYC1 and UQCRFS1), 2 core proteins (UQCRC1 and UQCRC2) and probably 6 low-molecular weight proteins. Heme b serves as cofactor.

The protein localises to the mitochondrion inner membrane. Its function is as follows. Component of the ubiquinol-cytochrome c reductase complex (complex III or cytochrome b-c1 complex) that is part of the mitochondrial respiratory chain. The b-c1 complex mediates electron transfer from ubiquinol to cytochrome c. Contributes to the generation of a proton gradient across the mitochondrial membrane that is then used for ATP synthesis. The chain is Cytochrome b (mt-cyb) from Channa asiatica (Small snakehead).